The primary structure comprises 342 residues: Farnesyl pyrophosphate synthase 2 (342 aa).

Isopentenyl diphosphate-binding residues include lysine 48, arginine 51, and glutamine 86. Aspartate 93 and aspartate 97 together coordinate Mg(2+). Position 102 (arginine 102) interacts with dimethylallyl diphosphate. Arginine 103 is an isopentenyl diphosphate binding site. Dimethylallyl diphosphate contacts are provided by lysine 190, threonine 191, glutamine 229, lysine 246, and lysine 255.

The protein belongs to the FPP/GGPP synthase family. Requires Mg(2+) as cofactor.

The protein localises to the cytoplasm. It catalyses the reaction isopentenyl diphosphate + dimethylallyl diphosphate = (2E)-geranyl diphosphate + diphosphate. The enzyme catalyses isopentenyl diphosphate + (2E)-geranyl diphosphate = (2E,6E)-farnesyl diphosphate + diphosphate. It functions in the pathway isoprenoid biosynthesis; farnesyl diphosphate biosynthesis; farnesyl diphosphate from geranyl diphosphate and isopentenyl diphosphate: step 1/1. The protein operates within isoprenoid biosynthesis; geranyl diphosphate biosynthesis; geranyl diphosphate from dimethylallyl diphosphate and isopentenyl diphosphate: step 1/1. In terms of biological role, catalyzes the sequential condensation of isopentenyl pyrophosphate with the allylic pyrophosphates, dimethylallyl pyrophosphate, and then with the resultant geranylpyrophosphate to the ultimate product farnesyl pyrophosphate. The sequence is that of Farnesyl pyrophosphate synthase 2 (FPS2) from Parthenium argentatum (Guayule rubber plant).